Reading from the N-terminus, the 398-residue chain is Polyferredoxin protein VhuB (398 aa).

11 consecutive 4Fe-4S ferredoxin-type domains span residues 2 to 31, 25 to 53, 54 to 83, 82 to 111, 123 to 152, 152 to 181, 191 to 219, 220 to 249, 259 to 291, 300 to 331, and 339 to 368; these read AGIK…IAPF, AIEI…VENN, GKLI…VDDR, DRFP…IPGK, QEPI…IEDE, ELAV…VAGK, KSFT…YNRE, DLIV…LEVE, EGLV…MINQ, TKTD…MGKI, and NRIE…LTGD. Positions 11, 14, 17, 21, 34, 37, 40, 44, 63, 66, 69, 73, 91, 94, 97, 101, 132, 135, 138, 142, 161, 164, 167, 171, 199, 202, 205, 209, 229, 232, 235, 239, 268, 271, 274, 278, 311, 314, 317, 321, 348, 351, 354, 358, 377, 380, 383, and 387 each coordinate [4Fe-4S] cluster.

Requires [4Fe-4S] cluster as cofactor.

The polypeptide is Polyferredoxin protein VhuB (vhuB) (Methanococcus voltae).